Consider the following 179-residue polypeptide: Large ribosomal subunit protein uL5 (179 aa).

Belongs to the universal ribosomal protein uL5 family. Part of the 50S ribosomal subunit; part of the 5S rRNA/L5/L18/L25 subcomplex. Contacts the 5S rRNA and the P site tRNA. Forms a bridge to the 30S subunit in the 70S ribosome.

Its function is as follows. This is one of the proteins that bind and probably mediate the attachment of the 5S RNA into the large ribosomal subunit, where it forms part of the central protuberance. In the 70S ribosome it contacts protein S13 of the 30S subunit (bridge B1b), connecting the 2 subunits; this bridge is implicated in subunit movement. Contacts the P site tRNA; the 5S rRNA and some of its associated proteins might help stabilize positioning of ribosome-bound tRNAs. The sequence is that of Large ribosomal subunit protein uL5 from Geobacillus kaustophilus (strain HTA426).